The chain runs to 178 residues: Putative pre-16S rRNA nuclease (178 aa).

Basic and acidic residues predominate over residues 1-18; that stretch reads MDHAEQGPDRPGVDDPGR. Positions 1 to 21 are disordered; it reads MDHAEQGPDRPGVDDPGRGRR.

Belongs to the YqgF nuclease family.

It is found in the cytoplasm. In terms of biological role, could be a nuclease involved in processing of the 5'-end of pre-16S rRNA. The chain is Putative pre-16S rRNA nuclease from Rhodococcus jostii (strain RHA1).